The sequence spans 1694 residues: MLNKKFKLNFIALTVAYALTPYTEAALVRDDVDYQIFRDFAENKGRFSVGATNVEVRDKNNHSLGNVLPNGIPMIDFSVVDVDKRIATLINPQYVVGVKHVSNGVSELHFGNLNGNMNNGNAKSHRDVSSEENRYFSVEKNEYPTKLNGKAVTTEDQTQKRREDYYMPRLDKFVTEVAPIEASTASSDAGTYNDQNKYPAFVRLGSGSQFIYKKGDNYSLILNNHEVGGNNLKLVGDAYTYGIAGTPYKVNHENNGLIGFGNSKEEHSDPKGILSQDPLTNYAVLGDSGSPLFVYDREKGKWLFLGSYDFWAGYNKKSWQEWNIYKPEFAKTVLDKDTAGSLTGSNTQYNWNPTGKTSVISNGSESLNVDLFDSSQDTDSKKNNHGKSVTLRGSGTLTLNNNIDQGAGGLFFEGDYEVKGTSDSTTWKGAGVSVADGKTVTWKVHNPKSDRLAKIGKGTLIVEGKGENKGSLKVGDGTVILKQQADANNKVKAFSQVGIVSGRSTVVLNDDKQVDPNSIYFGFRGGRLDANGNNLTFEHIRNIDDGARLVNHNTSKTSTVTITGESLITDPNTITPYNIDAPDEDNPYAFRRIKDGGQLYLNLENYTYYALRKGASTRSELPKNSGESNENWLYMGKTSDEAKRNVMNHINNERMNGFNGYFGEEEGKNNGNLNVTFKGKSEQNRFLLTGGTNLNGDLKVEKGTLFLSGRPTPHARDIAGISSTKKDQHFAENNEVVVEDDWINRNFKATNINVTNNATLYSGRNVANITSNITASDNAKVHIGYKAGDTVCVRSDYTGYVTCTTDKLSDKALNSFNATNVSGNVNLSGNANFVLGKANLFGTISGTGNSQVRLTENSHWHLTGDSNVNQLNLDKGHIHLNAQNDANKVTTYNTLTVNSLSGNGSFYYLTDLSNKQGDKVVVTKSATGNFTLQVADKTGEPTKNELTLFDASNATRNNLNVSLVGNTVDLGAWKYKLRNVNGRYDLYNPEVEKRNQTVDTTNITTPNNIQADVPSVPSNNEEIARVETPVPPPAPATPSETTETVAENSKQESKTVEKNEQDATETTAQNGEVAEEAKPSVKANTQTNEVAQSGSETEETQTTEIKETAKVEKEEKAKVEKDEIQEAPQMASETSPKQAKPAPKEVSTDTKVEETQVQAQPQTQSTTVAAAEATSPNSKPAEETQPSEKTNAEPVTPVVSKNQTENTTDQPTEREKTAKVETEKTQEPPQVASQASPKQEQSETVQPQAVLESENVPTVNNAEEVQAQLQTQTSATVSTKQPAPENSINTGSATAITETAEKSDKPQTETAASTEDASQHKANTVADNSVANNSESSDPKSRRRRSISQPQETSAEETTAASTDETTIADNSKRSKPNRRSRRSVRSEPTVTNGSDRSTVALRDLTSTNTNAVISDAMAKAQFVALNVGKAVSQHISQLEMNNEGQYNVWVSNTSMNENYSSSQYRRFSSKSTQTQLGWDQTISNNVQLGGVFTYVRNSNNFDKASSKNTLAQVNFYSKYYADNHWYLGIDLGYGKFQSNLKTNHNAKFARHTAQFGLTAGKAFNLGNFGITPIVGVRYSYLSNANFALAKDRIKVNPISVKTAFAQVDLSYTYHLGEFSVTPILSARYDTNQGSGKINVNQYDFAYNVENQQQYNAGLKLKYHNVKLSLIGGLTKAKQAEKQKTAELKLSFSF.

The N-terminal stretch at 1 to 25 (MLNKKFKLNFIALTVAYALTPYTEA) is a signal peptide. In terms of domain architecture, Peptidase S6 spans 26–332 (ALVRDDVDYQ…NIYKPEFAKT (307 aa)). The active site involves Ser-288. Positions 991–1403 (VEKRNQTVDT…GSDRSTVALR (413 aa)) are disordered. Polar residues predominate over residues 997-1021 (TVDTTNITTPNNIQADVPSVPSNNE). The span at 1037 to 1047 (TPSETTETVAE) shows a compositional bias: low complexity. A compositionally biased stretch (basic and acidic residues) spans 1049–1061 (SKQESKTVEKNEQ). Positions 1082-1095 (KANTQTNEVAQSGS) are enriched in polar residues. 2 stretches are compositionally biased toward basic and acidic residues: residues 1104–1124 (EIKETAKVEKEEKAKVEKDEI) and 1142–1154 (APKEVSTDTKVEE). Composition is skewed to polar residues over residues 1155–1178 (TQVQAQPQTQSTTVAAAEATSPNS) and 1199–1210 (VSKNQTENTTDQ). Over residues 1211 to 1226 (PTEREKTAKVETEKTQ) the composition is skewed to basic and acidic residues. 3 stretches are compositionally biased toward polar residues: residues 1227–1247 (EPPQVASQASPKQEQSETVQP), 1255–1297 (NVPT…TAIT), and 1308–1336 (TETAASTEDASQHKANTVADNSVANNSES). Positions 1352 to 1370 (ETSAEETTAASTDETTIAD) are enriched in low complexity. Residues 1374 to 1384 (RSKPNRRSRRS) are compositionally biased toward basic residues. The Autotransporter domain occupies 1442-1694 (NNEGQYNVWV…TAELKLSFSF (253 aa)).

The protein localises to the periplasm. The protein resides in the secreted. It is found in the cell surface. Its subcellular location is the cell outer membrane. The catalysed reaction is Cleavage of immunoglobulin A molecules at certain Pro-|-Xaa bonds in the hinge region. No small molecule substrates are known.. Virulence factor; cleaves host immunoglobulin A producing intact Fc and Fab fragments. This Haemophilus influenzae (strain ATCC 51907 / DSM 11121 / KW20 / Rd) protein is Immunoglobulin A1 protease autotransporter (iga).